Reading from the N-terminus, the 103-residue chain is uncharacterized protein (103 aa).

This is an uncharacterized protein from Enterobacteria phage T4 (Bacteriophage T4).